The sequence spans 216 residues: MAGYRADDEYDYLFKVVLIGDSGVGKSNLLSRFTKNEFSLESKSTIGVEFATRSLNVDDKVIKAQIWDTAGQERYRAITSAYYRGAVGALLVYDVTRHSTFENVETWLKELRNHTDPNIVVMLVGNKSDLRHLVAVQTEDAKSFAEKESLYFMETSALEATNVENAFAEVLTQIHHIVSKKAMEAASESANVPSKGDKIDIGKDVSAVKKGGCCSN.

20 to 27 (GDSGVGKS) serves as a coordination point for GTP. The Effector region signature appears at 42 to 50 (SKSTIGVEF). Residues 68–72 (DTAGQ), 126–129 (NKSD), and 156–157 (SA) each bind GTP. Residues cysteine 213 and cysteine 214 are each lipidated (S-geranylgeranyl cysteine).

It belongs to the small GTPase superfamily. Rab family.

The protein resides in the cell membrane. Intracellular vesicle trafficking and protein transport. The polypeptide is Ras-related protein RABA1c (RABA1C) (Arabidopsis thaliana (Mouse-ear cress)).